A 236-amino-acid chain; its full sequence is ATP synthase subunit a (236 aa).

The next 5 helical transmembrane spans lie at 18–38 (SNLLMVTVASVIVFLIAVLCT), 80–100 (VTLLMYIFVSNMLGLPFAIVI), 112–132 (DPAITLTLAVMVVVLSHYYGI), 179–199 (ILLSLLAGLATTGFLGTIGAA), and 200–220 (IPMLLWQGFSIFVGAIQAFIF).

It belongs to the ATPase A chain family. In terms of assembly, F-type ATPases have 2 components, CF(1) - the catalytic core - and CF(0) - the membrane proton channel. CF(1) has five subunits: alpha(3), beta(3), gamma(1), delta(1), epsilon(1). CF(0) has three main subunits: a(1), b(2) and c(9-12). The alpha and beta chains form an alternating ring which encloses part of the gamma chain. CF(1) is attached to CF(0) by a central stalk formed by the gamma and epsilon chains, while a peripheral stalk is formed by the delta and b chains.

It is found in the cell membrane. Its function is as follows. Key component of the proton channel; it plays a direct role in the translocation of protons across the membrane. The sequence is that of ATP synthase subunit a from Priestia megaterium (strain ATCC 12872 / QMB1551) (Bacillus megaterium).